The chain runs to 180 residues: Nucleoside triphosphate/diphosphate phosphatase (180 aa).

The active-site Proton donor is R26. Positions 90, 106, 108, 110, 123, and 126 each coordinate Mg(2+).

The protein belongs to the Ntdp family. Requires Mg(2+) as cofactor.

It catalyses the reaction a ribonucleoside 5'-triphosphate + H2O = a ribonucleoside 5'-diphosphate + phosphate + H(+). The catalysed reaction is a ribonucleoside 5'-diphosphate + H2O = a ribonucleoside 5'-phosphate + phosphate + H(+). Its function is as follows. Has nucleoside phosphatase activity towards nucleoside triphosphates and nucleoside diphosphates. In Staphylococcus aureus (strain Mu3 / ATCC 700698), this protein is Nucleoside triphosphate/diphosphate phosphatase.